A 645-amino-acid polypeptide reads, in one-letter code: E3 ubiquitin-protein ligase ORTHRUS 2 (645 aa).

Residues 12–63 (DGVCMRCKSNPPPEESLTCGTCVTPWHVSCLSSPPKTLASTLQWHCPDCSGE) form a PHD-type zinc finger. Positions 96–133 (LSTEEKAKMRQRLLSGKGVEEDDEEEKRKKKGKGKNPN) are disordered. Residues 146-185 (CSFCMQLPERPVTKPCGHNACLKCFEKWMGQGKRTCGKCR) form an RING-type 1 zinc finger. Residues 273 to 422 (VRNQGLLVGE…FKVCRYLFVR (150 aa)) form the YDG domain. The segment at 518–575 (CQICQQVLTLPVTTPCAHNFCKACLEAKFAGKTLVRERSTGGRTLRSRKNVLNCPCCP) adopts an RING-type 2 zinc-finger fold. A coiled-coil region spans residues 583 to 613 (QNPQVNREVAEVIEKLKTQEEDTAELEDEDE). The segment at 599 to 645 (KTQEEDTAELEDEDEGECSGTTPEEDSEQPKKRIKLDTDATVSATIR) is disordered. Residues 603–625 (EDTAELEDEDEGECSGTTPEEDS) show a composition bias toward acidic residues. Positions 626–636 (EQPKKRIKLDT) are enriched in basic and acidic residues.

In terms of assembly, interacts with histones CENH3, HTB2, HTR3 and H4. As to expression, mostly expressed in inflorescence and, to a lower extent, in leaves.

The protein resides in the nucleus. It catalyses the reaction S-ubiquitinyl-[E2 ubiquitin-conjugating enzyme]-L-cysteine + [acceptor protein]-L-lysine = [E2 ubiquitin-conjugating enzyme]-L-cysteine + N(6)-ubiquitinyl-[acceptor protein]-L-lysine.. The protein operates within protein modification; protein ubiquitination. In terms of biological role, E3 ubiquitin-protein ligase. Participates in CpG methylation-dependent transcriptional regulation and epigenetic transcriptional silencing. Mediates ubiquitination with the E2 ubiquitin-conjugating enzyme UBC11. Promotes methylation-mediated gene silencing leading, for example, to early flowering. Associates with methylated DNA, and can bind to CpG, CpNpG, and CpNpN DNA motifs, with a strong preference for methylated forms, and with highest affinity for CpG substrate. Probably acts at the DNA methylation?histone interface to maintain centromeric heterochromatin. In Arabidopsis thaliana (Mouse-ear cress), this protein is E3 ubiquitin-protein ligase ORTHRUS 2 (ORTH2).